The primary structure comprises 1132 residues: DNA-directed RNA polymerase subunit beta (1132 aa).

Belongs to the RNA polymerase beta chain family. In terms of assembly, the RNAP catalytic core consists of 2 alpha, 1 beta, 1 beta' and 1 omega subunit. When a sigma factor is associated with the core the holoenzyme is formed, which can initiate transcription.

The enzyme catalyses RNA(n) + a ribonucleoside 5'-triphosphate = RNA(n+1) + diphosphate. Functionally, DNA-dependent RNA polymerase catalyzes the transcription of DNA into RNA using the four ribonucleoside triphosphates as substrates. In Carboxydothermus hydrogenoformans (strain ATCC BAA-161 / DSM 6008 / Z-2901), this protein is DNA-directed RNA polymerase subunit beta.